We begin with the raw amino-acid sequence, 34 residues long: uncharacterized protein (34 aa).

This is an uncharacterized protein from Escherichia coli (Bacteriophage T4).